The sequence spans 677 residues: Protein windpipe (677 aa).

An N-terminal signal peptide occupies residues 1–20 (MERVHLTAWLALFLIVVANA). Topologically, residues 21-451 (TPTPARTPTG…IGKPKDDSSA (431 aa)) are extracellular. N-linked (GlcNAc...) asparagine glycosylation is found at N53 and N80. LRR repeat units follow at residues 91-116 (LPELTSADLSHNQLKDLGHLGKGLKR), 118-133 (NLKHNQLTSDKLRKLP), 134-156 (QHLQVLNLQHNNITHLPLELTHM), and 158-183 (QLHQLELSHNAINCSCQTLEVRNWLV). 2 N-linked (GlcNAc...) asparagine glycosylation sites follow: N145 and N170. The 33-residue stretch at 184–216 (ERIVYMEHPVVCSYPLEFRGRSWLQLKQDEICK) folds into the LRRCT domain. 3 disordered regions span residues 264-285 (AKKVRSPQIPLPSDQVEGSGDL), 298-317 (TVAEPEAAESQLVDAAASPS), and 325-385 (KDED…TVFS). The segment covering 347-372 (SKVKITSEDDIDSDGKPEESDVRPLE) has biased composition (basic and acidic residues). The segment covering 374–385 (PENSENPDTVFS) has biased composition (polar residues). A helical membrane pass occupies residues 452 to 472 (IYYLLAVIGLIVVGLVLFVAI). The Cytoplasmic segment spans residues 473-677 (KRCKYDSNAA…EPTHQVINGH (205 aa)). Disordered regions lie at residues 502–523 (LGKPLHKNGHGNGQEHSPLIGE) and 539–677 (NGEA…INGH). A compositionally biased stretch (low complexity) spans 595 to 607 (AQQQQLAEQNNNE).

Interacts with dome; the interaction promotes internalization of dome and its subsequent lysosomal degradation. In terms of tissue distribution, in adult intestine, expressed in both small progenitor cells and large nuclei enterocytes (at protein level). During embryogenesis, restricted to the developing trachea.

Its subcellular location is the cell membrane. Its function is as follows. Plays a role in negative regulation of the JAK/STAT pathway by binding to the receptor dome and promoting its internalization for subsequent lysosomal degradation, thereby reducing JAK/STAT signaling. In Drosophila melanogaster (Fruit fly), this protein is Protein windpipe.